Reading from the N-terminus, the 89-residue chain is Large ribosomal subunit protein bL27 (89 aa).

It belongs to the bacterial ribosomal protein bL27 family.

In Cytophaga hutchinsonii (strain ATCC 33406 / DSM 1761 / CIP 103989 / NBRC 15051 / NCIMB 9469 / D465), this protein is Large ribosomal subunit protein bL27.